The following is a 62-amino-acid chain: Histone H1.2, embryonic (62 aa).

An H15 domain is found at 1 to 53 (HVVAAITALKERGGSSMKKQSVFIKKALKSGVEKGTLVQVKGKGASGSFKLGK).

It belongs to the histone H1/H5 family.

It is found in the nucleus. Its subcellular location is the chromosome. Functionally, histones H1 are necessary for the condensation of nucleosome chains into higher-order structures. This chain is Histone H1.2, embryonic, found in Parechinus angulosus (Angulate sea urchin).